The chain runs to 421 residues: UDP-N-acetylglucosamine 1-carboxyvinyltransferase (421 aa).

22–23 (KN) serves as a coordination point for phosphoenolpyruvate. Residue Arg93 coordinates UDP-N-acetyl-alpha-D-glucosamine. Catalysis depends on Cys117, which acts as the Proton donor. At Cys117 the chain carries 2-(S-cysteinyl)pyruvic acid O-phosphothioketal. UDP-N-acetyl-alpha-D-glucosamine is bound by residues 122–126 (RPVDL), Asp308, and Val330.

Belongs to the EPSP synthase family. MurA subfamily.

The protein localises to the cytoplasm. The enzyme catalyses phosphoenolpyruvate + UDP-N-acetyl-alpha-D-glucosamine = UDP-N-acetyl-3-O-(1-carboxyvinyl)-alpha-D-glucosamine + phosphate. Its pathway is cell wall biogenesis; peptidoglycan biosynthesis. Functionally, cell wall formation. Adds enolpyruvyl to UDP-N-acetylglucosamine. The protein is UDP-N-acetylglucosamine 1-carboxyvinyltransferase of Azotobacter vinelandii (strain DJ / ATCC BAA-1303).